Consider the following 282-residue polypeptide: D-alanine aminotransferase (282 aa).

Tyr-32 contacts substrate. Arg-51 is a binding site for pyridoxal 5'-phosphate. Substrate is bound by residues Arg-99 and His-101. Residue Lys-146 is the Proton acceptor of the active site. Lys-146 is subject to N6-(pyridoxal phosphate)lysine. Residue Glu-178 participates in pyridoxal 5'-phosphate binding.

Belongs to the class-IV pyridoxal-phosphate-dependent aminotransferase family. Homodimer. The cofactor is pyridoxal 5'-phosphate.

It carries out the reaction D-alanine + 2-oxoglutarate = D-glutamate + pyruvate. Its function is as follows. Acts on the D-isomers of alanine, leucine, aspartate, glutamate, aminobutyrate, norvaline and asparagine. The enzyme transfers an amino group from a substrate D-amino acid to the pyridoxal phosphate cofactor to form pyridoxamine and an alpha-keto acid in the first half-reaction. The second half-reaction is the reverse of the first, transferring the amino group from the pyridoxamine to a second alpha-keto acid to form the product D-amino acid via a ping-pong mechanism. This is an important process in the formation of D-alanine and D-glutamate, which are essential bacterial cell wall components. This chain is D-alanine aminotransferase (dat), found in Staphylococcus epidermidis (strain ATCC 35984 / DSM 28319 / BCRC 17069 / CCUG 31568 / BM 3577 / RP62A).